The chain runs to 521 residues: Bifunctional purine biosynthesis protein PurH (521 aa).

The region spanning 1–145 (MIKQALISVS…KNHRDVTVVV (145 aa)) is the MGS-like domain.

Belongs to the PurH family.

The enzyme catalyses (6R)-10-formyltetrahydrofolate + 5-amino-1-(5-phospho-beta-D-ribosyl)imidazole-4-carboxamide = 5-formamido-1-(5-phospho-D-ribosyl)imidazole-4-carboxamide + (6S)-5,6,7,8-tetrahydrofolate. The catalysed reaction is IMP + H2O = 5-formamido-1-(5-phospho-D-ribosyl)imidazole-4-carboxamide. The protein operates within purine metabolism; IMP biosynthesis via de novo pathway; 5-formamido-1-(5-phospho-D-ribosyl)imidazole-4-carboxamide from 5-amino-1-(5-phospho-D-ribosyl)imidazole-4-carboxamide (10-formyl THF route): step 1/1. It functions in the pathway purine metabolism; IMP biosynthesis via de novo pathway; IMP from 5-formamido-1-(5-phospho-D-ribosyl)imidazole-4-carboxamide: step 1/1. The sequence is that of Bifunctional purine biosynthesis protein PurH from Burkholderia cenocepacia (strain HI2424).